Reading from the N-terminus, the 548-residue chain is Multidrug efflux system permease protein Rv1217c (548 aa).

12 consecutive transmembrane segments (helical) span residues 39 to 59 (VSLP…YIAS), 99 to 119 (GIWK…LTVI), 148 to 168 (ALLL…LGLL), 178 to 198 (VAFG…AAVA), 210 to 230 (AVAF…DAGS), 253 to 273 (WWVL…AYRL), 313 to 333 (LLWT…VHGI), 359 to 379 (AFLA…AVSL), 410 to 430 (LAMA…AAGL), 450 to 470 (AAVQ…LFGL), 477 to 497 (VAWG…LAGF), and 521 to 541 (VPLL…AMAF).

The complex is probably composed of two ATP-binding proteins (Rv1218c) and a transmembrane protein (Rv1217c).

It is found in the cell inner membrane. In terms of biological role, probably part of the ABC transporter complex Rv1217c-Rv1218c involved in the resistance to a wide range of structurally unrelated drugs. Probably responsible for the translocation of the substrate across the membrane. The sequence is that of Multidrug efflux system permease protein Rv1217c from Mycobacterium tuberculosis (strain ATCC 25618 / H37Rv).